The chain runs to 291 residues: Porphobilinogen deaminase (291 aa).

Cys237 carries the post-translational modification S-(dipyrrolylmethanemethyl)cysteine.

The protein belongs to the HMBS family. In terms of assembly, monomer. Dipyrromethane is required as a cofactor.

It carries out the reaction 4 porphobilinogen + H2O = hydroxymethylbilane + 4 NH4(+). The protein operates within porphyrin-containing compound metabolism; protoporphyrin-IX biosynthesis; coproporphyrinogen-III from 5-aminolevulinate: step 2/4. Functionally, tetrapolymerization of the monopyrrole PBG into the hydroxymethylbilane pre-uroporphyrinogen in several discrete steps. This Clostridium perfringens (strain 13 / Type A) protein is Porphobilinogen deaminase.